Reading from the N-terminus, the 302-residue chain is Sulfate adenylyltransferase subunit 2 (302 aa).

The protein belongs to the PAPS reductase family. CysD subfamily. As to quaternary structure, heterodimer composed of CysD, the smaller subunit, and CysN.

It catalyses the reaction sulfate + ATP + H(+) = adenosine 5'-phosphosulfate + diphosphate. It functions in the pathway sulfur metabolism; hydrogen sulfide biosynthesis; sulfite from sulfate: step 1/3. Functionally, with CysN forms the ATP sulfurylase (ATPS) that catalyzes the adenylation of sulfate producing adenosine 5'-phosphosulfate (APS) and diphosphate, the first enzymatic step in sulfur assimilation pathway. APS synthesis involves the formation of a high-energy phosphoric-sulfuric acid anhydride bond driven by GTP hydrolysis by CysN coupled to ATP hydrolysis by CysD. This chain is Sulfate adenylyltransferase subunit 2, found in Salmonella agona (strain SL483).